The primary structure comprises 149 residues: Sperm surface protein Sp17 (149 aa).

Residues 83-96 (CEQELAKSSGREET) are compositionally biased toward basic and acidic residues. Positions 83 to 114 (CEQELAKSSGREETPVTPFEESTEEEREQEEA) are disordered. Acidic residues predominate over residues 103-113 (ESTEEEREQEE). The 30-residue stretch at 112–141 (EEAAALKIQSLFRGHVAREEVKKMKSDKNE) folds into the IQ domain.

In terms of assembly, homodimer. May interact with ROPN1. In terms of tissue distribution, testis- and sperm-specific.

It localises to the membrane. Functionally, sperm surface zona pellucida binding protein. Helps to bind spermatozoa to the zona pellucida with high affinity. Might function in binding zona pellucida and carbohydrates. This chain is Sperm surface protein Sp17 (Spa17), found in Mus musculus (Mouse).